The chain runs to 160 residues: Cyanate hydratase (160 aa).

Residues Arg-100, Glu-103, and Ser-126 contribute to the active site.

This sequence belongs to the cyanase family.

It carries out the reaction cyanate + hydrogencarbonate + 3 H(+) = NH4(+) + 2 CO2. Catalyzes the reaction of cyanate with bicarbonate to produce ammonia and carbon dioxide. The chain is Cyanate hydratase from Aspergillus oryzae (strain ATCC 42149 / RIB 40) (Yellow koji mold).